The primary structure comprises 218 residues: Very-long-chain (3R)-3-hydroxyacyl-CoA dehydratase (218 aa).

Topologically, residues 1-6 are cytoplasmic; the sequence is MKTYLS. A helical membrane pass occupies residues 7 to 29; that stretch reads IYYLIQFCGHSWIFTNMTTRFLF. Residues 30–38 lie on the Lumenal side of the membrane; the sequence is FGQDAFADT. A helical membrane pass occupies residues 39–61; the sequence is FYSIGLVMQGCQLLSILELAHIL. The Cytoplasmic portion of the chain corresponds to 62-67; the sequence is LGVEQN. Residues 68 to 87 traverse the membrane as a helical segment; that stretch reads GFLPMFLQVAERFIILFVVI. Topologically, residues 88 to 96 are lumenal; it reads TSQEEVQSK. A helical transmembrane segment spans residues 97 to 116; that stretch reads YIVCALFFIWNLWDVIRYPY. At 117–136 the chain is on the cytoplasmic side; the sequence is DMLAAVDTDYSALTWLRHTW. A helical transmembrane segment spans residues 137 to 159; sequence WIVAYPLSVLAEAYTIYESLPYF. Residues Tyr-141 and Glu-148 contribute to the active site. The Lumenal portion of the chain corresponds to 160–178; it reads ESLGTYSFKMALPVSLSFH. A helical membrane pass occupies residues 179 to 201; it reads FPYILTLYLVLQPVGMLYICSCL. Over 202–218 the chain is Cytoplasmic; the sequence is WSERKQYFQRKLKLKKN.

It belongs to the very long-chain fatty acids dehydratase HACD family.

Its subcellular location is the endoplasmic reticulum membrane. It carries out the reaction a very-long-chain (3R)-3-hydroxyacyl-CoA = a very-long-chain (2E)-enoyl-CoA + H2O. The enzyme catalyses (3R)-hydroxyhexadecanoyl-CoA = (2E)-hexadecenoyl-CoA + H2O. Its pathway is lipid metabolism; fatty acid biosynthesis. Catalyzes the third of the four reactions of the long-chain fatty acids elongation cycle. This endoplasmic reticulum-bound enzymatic process, allows the addition of two carbons to the chain of long- and very long-chain fatty acids/VLCFAs per cycle. This enzyme catalyzes the dehydration of the 3-hydroxyacyl-CoA intermediate into trans-2,3-enoyl-CoA, within each cycle of fatty acid elongation. Thereby, it participates in the production of VLCFAs of different chain lengths that are involved in multiple biological processes as precursors of membrane lipids and lipid mediators. This chain is Very-long-chain (3R)-3-hydroxyacyl-CoA dehydratase, found in Xenopus laevis (African clawed frog).